Consider the following 394-residue polypeptide: Trans-enoyl reductase fumoC (394 aa).

Residue 62 to 65 (VDGK) coordinates NADP(+). 152-159 (ASLASVGM) is a substrate binding site. NADP(+) is bound by residues 224 to 227 (SSSS), Tyr242, and 289 to 290 (LD). 309-313 (TLTQF) contacts substrate. An NADP(+)-binding site is contributed by 378-379 (VK).

It belongs to the zinc-containing alcohol dehydrogenase family. In terms of assembly, monomer.

Its pathway is secondary metabolite biosynthesis. Its function is as follows. Trans-enoyl reductase; part of the gene cluster that mediates the biosynthesis of fumosorinone, a 2-pyridone alkaloid that acts as an inhibitor of protein tyrosine phosphatase 1B which is implicated asa negative regulator of insulin receptor signaling and a potential drug target for the treatment of type II diabetes and other associated metabolic syndromes. The polyketide-amino acid backbone of fumosorinone is first assembled by the PKS-NRPS hybrid fumoS. The PKS modules condense one acetyl-CoA starter unit with 7 malonyl-CoA units, programmed C-methylations occurring after the first 3 and the sixth extensions, and cycles of full reduction occurring after the first 2 extensions. Because fumoS lacks a designated enoyl reductase (ER) domain, the required activity is provided the enoyl reductase fumoC. Upon formation of the polyketide backbone on the thiotemplate, the polyketide is transferred to the NRPS module and linked to tyrosine to produce the acyltetramic acid intermediate called prefumosorinone A. The cytochrome P450 monooxygenase fumoA then probably catalyzes an unprecedented oxidative ring expansion of prefumosorinone A to form prefumosorinone B which contains the 2-pyridone core of fumosorinone. The cytochrome P450 monooxygenase fumoB might hydroxylate the nitrogen of prefumosorinone B, but not the acyltetramic acid prefumosorinone A, to form fumosorinone. The polypeptide is Trans-enoyl reductase fumoC (Cordyceps fumosorosea (strain ARSEF 2679) (Isaria fumosorosea)).